A 283-amino-acid polypeptide reads, in one-letter code: E3 ubiquitin-protein ligase MARCHF5 (283 aa).

The segment at 9–78 (VQQMLDRSCW…PQCNAEYLIV (70 aa)) adopts an RING-CH-type zinc-finger fold. Positions 17, 20, 36, 38, 46, 49, 68, and 71 each coordinate Zn(2+). 4 helical membrane-spanning segments follow: residues 102–122 (FAAA…YGAV), 142–162 (PLFL…GKMI), 212–232 (ILCG…LMFS), and 241–261 (TILG…YFKQ).

The protein localises to the mitochondrion outer membrane. It localises to the endoplasmic reticulum membrane. The enzyme catalyses S-ubiquitinyl-[E2 ubiquitin-conjugating enzyme]-L-cysteine + [acceptor protein]-L-lysine = [E2 ubiquitin-conjugating enzyme]-L-cysteine + N(6)-ubiquitinyl-[acceptor protein]-L-lysine.. It participates in protein modification; protein ubiquitination. Functionally, mitochondrial E3 ubiquitin-protein ligase that plays a crucial role in the control of mitochondrial morphology by acting as a positive regulator of mitochondrial fission. May play a role in the prevention of cell senescence acting as a regulator of mitochondrial quality control. The sequence is that of E3 ubiquitin-protein ligase MARCHF5 (marchf5) from Xenopus laevis (African clawed frog).